The following is a 288-amino-acid chain: UTP--glucose-1-phosphate uridylyltransferase (288 aa).

Belongs to the UDPGP type 2 family.

The catalysed reaction is alpha-D-glucose 1-phosphate + UTP + H(+) = UDP-alpha-D-glucose + diphosphate. Its pathway is glycolipid metabolism; diglucosyl-diacylglycerol biosynthesis. Functionally, catalyzes the formation of UDP-glucose from glucose-1-phosphate and UTP. This is an intermediate step in the biosynthesis of diglucosyl-diacylglycerol (Glc2-DAG), i.e. the predominant glycolipid found in the S.aureus membrane, which is also used as a membrane anchor for lipoteichoic acid (LTA). This chain is UTP--glucose-1-phosphate uridylyltransferase (gtaB), found in Staphylococcus aureus (strain USA300).